The chain runs to 376 residues: MAPSTKVLSLLLLYVVVSLASGDESIINDHLQLPSDGKWRTDEEVRSIYLQWSAEHGKTNNNNNGIINDQDKRFNIFKDNLRFIDLHNEDNKNATYKLGLTKFTDLTNDEYRKLYLGARTEPARRIAKAKNVNQKYSAAVNGKEVPETVDWRQKGAVNPIKDQGTCGSCWAFSTTAAVEGINKIVTGELISLSEQELVDCDKSYNQGCNGGLMDYAFQFIMKNGGLNTEKDYPYRGFGGKCNSFLKNSRVVSIDGYEDVPTKDETALKKAISYQPVSVAIEAGGRIFQHYQSGIFTGSCGTNLDHAVVAVGYGSENGVDYWIVRNSWGPRWGEEGYIRMERNLAASKSGKCGIAVEASYPVKYSPNPVRGNTISSV.

The first 22 residues, 1 to 22 (MAPSTKVLSLLLLYVVVSLASG), serve as a signal peptide directing secretion. The propeptide at 23–144 (DESIINDHLQ…KYSAAVNGKE (122 aa)) is activation peptide. Asparagine 93 carries N-linked (GlcNAc...) asparagine glycosylation. 3 disulfide bridges follow: cysteine 166-cysteine 208, cysteine 200-cysteine 241, and cysteine 299-cysteine 351. Cysteine 169 is an active-site residue. Catalysis depends on residues histidine 305 and asparagine 325.

Belongs to the peptidase C1 family.

Functionally, probable thiol protease. The polypeptide is Germination-specific cysteine protease 1 (Arabidopsis thaliana (Mouse-ear cress)).